The primary structure comprises 410 residues: Lysosome-associated membrane glycoprotein 2 (410 aa).

Positions 1–28 (MVCFRLFPVPGSGLVLVCLVLGAVRSYA) are cleaved as a signal peptide. Residues 29–192 (LELNLTDSEN…STNEFLCDKD (164 aa)) form a first lumenal domain region. At 29 to 375 (LELNLTDSEN…QDCSADDDNF (347 aa)) the chain is on the lumenal side. N-linked (GlcNAc...) (polylactosaminoglycan) asparagine glycans are attached at residues asparagine 32 and asparagine 38. Cysteine 41 and cysteine 79 are disulfide-bonded. Residues asparagine 49, asparagine 58, asparagine 75, asparagine 101, asparagine 123, and asparagine 179 are each glycosylated (N-linked (GlcNAc...) asparagine). A disulfide bond links cysteine 153 and cysteine 189. The tract at residues 193-228 (KTSTVAPTIHTTVPSPTTTPTPKEKPEAGTYSVNNG) is hinge. O-linked (GalNAc...) serine glycosylation occurs at serine 195. Residues threonine 196, threonine 200, threonine 203, and threonine 204 are each glycosylated (O-linked (GalNAc...) threonine). The segment covering 199–213 (PTIHTTVPSPTTTPT) has biased composition (low complexity). The interval 199–221 (PTIHTTVPSPTTTPTPKEKPEAG) is disordered. Serine 207 carries an O-linked (GalNAc...) serine; partial glycan. An O-linked (GalNAc...) threonine; partial glycan is attached at threonine 209. O-linked (GalNAc...) threonine glycosylation is found at threonine 210 and threonine 211. The O-linked (GalNAc...) threonine; partial glycan is linked to threonine 213. 5 N-linked (GlcNAc...) asparagine glycosylation sites follow: asparagine 229, asparagine 242, asparagine 257, asparagine 275, and asparagine 300. Residues 229 to 375 (NDTCLLATMG…QDCSADDDNF (147 aa)) are second lumenal domain. Cysteine 232 and cysteine 265 are disulfide-bonded. Asparagine 307 carries an N-linked (GlcNAc...) (polylactosaminoglycan) asparagine glycan. Asparagine 317 and asparagine 356 each carry an N-linked (GlcNAc...) asparagine glycan. A disulfide bridge links cysteine 331 with cysteine 368. The helical transmembrane segment at 376–399 (LVPIAVGAALAGVLILVLLAYFIG) threads the bilayer. At 400-410 (LKHHHAGYEQF) the chain is on the cytoplasmic side. Residues 401–404 (KHHH) are important for binding and subsequent lysosomal degradation of target proteins.

This sequence belongs to the LAMP family. As to quaternary structure, monomer. Homodimer. Homotrimer. Forms large homooligomers. Interacts (via its cytoplasmic region) with HSPA8; HSPA8 mediates recruitment of proteins with a KFERQ motif to the surface of the lysosome for chaperone-mediated autophagy. Interacts with HSP90 in the lysosome lumen; this enhances LAMP2 stability. Interacts with MLLT11. Interacts with ABCB9. Interacts with FURIN. Interacts with CT55; this interaction may be important for LAMP2 protein stability. Interacts with TMEM175; inhibiting the proton channel activity of TMEM175. Forms a ternary complex with RAB7A and RUFY4 (via RUN domain); the interaction with RAB7A is mediated by RUFY4 (via RUN and coiled coil domains). In terms of assembly, (Microbial infection) Interacts with mumps virus protein F; this interaction promotes protein F cleavage by FURIN. In terms of processing, O- and N-glycosylated; some of the 16 N-linked glycans are polylactosaminoglycans. As to expression, isoform LAMP-2A is highly expressed in placenta, lung and liver, less in kidney and pancreas, low in brain and skeletal muscle. Isoform LAMP-2B is detected in spleen, thymus, prostate, testis, small intestine, colon, skeletal muscle, brain, placenta, lung, kidney, ovary and pancreas and liver. Isoform LAMP-2C is detected in small intestine, colon, heart, brain, skeletal muscle, and at lower levels in kidney and placenta.

The protein resides in the lysosome membrane. It is found in the endosome membrane. The protein localises to the cell membrane. Its subcellular location is the cytoplasmic vesicle. It localises to the autophagosome membrane. Its function is as follows. Lysosomal membrane glycoprotein which plays an important role in lysosome biogenesis, lysosomal pH regulation and autophagy. Acts as an important regulator of lysosomal lumen pH regulation by acting as a direct inhibitor of the proton channel TMEM175, facilitating lysosomal acidification for optimal hydrolase activity. Plays an important role in chaperone-mediated autophagy, a process that mediates lysosomal degradation of proteins in response to various stresses and as part of the normal turnover of proteins with a long biological half-live. Functions by binding target proteins, such as GAPDH, NLRP3 and MLLT11, and targeting them for lysosomal degradation. In the chaperone-mediated autophagy, acts downstream of chaperones, such as HSPA8/HSC70, which recognize and bind substrate proteins and mediate their recruitment to lysosomes, where target proteins bind LAMP2. Plays a role in lysosomal protein degradation in response to starvation. Required for the fusion of autophagosomes with lysosomes during autophagy. Cells that lack LAMP2 express normal levels of VAMP8, but fail to accumulate STX17 on autophagosomes, which is the most likely explanation for the lack of fusion between autophagosomes and lysosomes. Required for normal degradation of the contents of autophagosomes. Required for efficient MHC class II-mediated presentation of exogenous antigens via its function in lysosomal protein degradation; antigenic peptides generated by proteases in the endosomal/lysosomal compartment are captured by nascent MHC II subunits. Is not required for efficient MHC class II-mediated presentation of endogenous antigens. Modulates chaperone-mediated autophagy. Decreases presentation of endogenous antigens by MHCII. Does not play a role in the presentation of exogenous and membrane-derived antigens by MHCII. In terms of biological role, (Microbial infection) Supports the FURIN-mediated cleavage of mumps virus fusion protein F by interacting with both FURIN and the unprocessed form but not the processed form of the viral protein F. The polypeptide is Lysosome-associated membrane glycoprotein 2 (LAMP2) (Homo sapiens (Human)).